A 433-amino-acid chain; its full sequence is Adenylosuccinate synthetase (433 aa).

GTP contacts are provided by residues 13–19 and 41–43; these read GDEGKGK and GHT. D14 serves as the catalytic Proton acceptor. Mg(2+) is bound by residues D14 and G41. IMP contacts are provided by residues 14 to 17, 39 to 42, T130, R144, Q225, T240, and R304; these read DEGK and NAGH. Catalysis depends on H42, which acts as the Proton donor. 300-306 contributes to the substrate binding site; sequence STTGRKR. Residues R306, 332-334, and 414-416 each bind GTP; these read KLD and STG.

The protein belongs to the adenylosuccinate synthetase family. Homodimer. Requires Mg(2+) as cofactor.

Its subcellular location is the cytoplasm. The catalysed reaction is IMP + L-aspartate + GTP = N(6)-(1,2-dicarboxyethyl)-AMP + GDP + phosphate + 2 H(+). It participates in purine metabolism; AMP biosynthesis via de novo pathway; AMP from IMP: step 1/2. Its function is as follows. Plays an important role in the de novo pathway of purine nucleotide biosynthesis. Catalyzes the first committed step in the biosynthesis of AMP from IMP. The chain is Adenylosuccinate synthetase from Buchnera aphidicola subsp. Acyrthosiphon pisum (strain Tuc7).